The sequence spans 643 residues: 1-deoxy-D-xylulose-5-phosphate synthase (643 aa).

Residues His89 and 130–132 (GHS) contribute to the thiamine diphosphate site. Asp161 serves as a coordination point for Mg(2+). Thiamine diphosphate is bound by residues 162–163 (GA), Asn190, Phe297, and Glu380. Position 190 (Asn190) interacts with Mg(2+).

Belongs to the transketolase family. DXPS subfamily. As to quaternary structure, homodimer. Mg(2+) serves as cofactor. The cofactor is thiamine diphosphate.

The catalysed reaction is D-glyceraldehyde 3-phosphate + pyruvate + H(+) = 1-deoxy-D-xylulose 5-phosphate + CO2. It functions in the pathway metabolic intermediate biosynthesis; 1-deoxy-D-xylulose 5-phosphate biosynthesis; 1-deoxy-D-xylulose 5-phosphate from D-glyceraldehyde 3-phosphate and pyruvate: step 1/1. In terms of biological role, catalyzes the acyloin condensation reaction between C atoms 2 and 3 of pyruvate and glyceraldehyde 3-phosphate to yield 1-deoxy-D-xylulose-5-phosphate (DXP). This Hahella chejuensis (strain KCTC 2396) protein is 1-deoxy-D-xylulose-5-phosphate synthase.